The sequence spans 243 residues: Ubiquinone/menaquinone biosynthesis C-methyltransferase UbiE (243 aa).

Residues Thr-69, Asp-90, and 116 to 117 contribute to the S-adenosyl-L-methionine site; that span reads DA.

It belongs to the class I-like SAM-binding methyltransferase superfamily. MenG/UbiE family.

It catalyses the reaction a 2-demethylmenaquinol + S-adenosyl-L-methionine = a menaquinol + S-adenosyl-L-homocysteine + H(+). The catalysed reaction is a 2-methoxy-6-(all-trans-polyprenyl)benzene-1,4-diol + S-adenosyl-L-methionine = a 5-methoxy-2-methyl-3-(all-trans-polyprenyl)benzene-1,4-diol + S-adenosyl-L-homocysteine + H(+). The protein operates within quinol/quinone metabolism; menaquinone biosynthesis; menaquinol from 1,4-dihydroxy-2-naphthoate: step 2/2. It participates in cofactor biosynthesis; ubiquinone biosynthesis. Functionally, methyltransferase required for the conversion of demethylmenaquinol (DMKH2) to menaquinol (MKH2) and the conversion of 2-polyprenyl-6-methoxy-1,4-benzoquinol (DDMQH2) to 2-polyprenyl-3-methyl-6-methoxy-1,4-benzoquinol (DMQH2). The protein is Ubiquinone/menaquinone biosynthesis C-methyltransferase UbiE of Burkholderia cenocepacia (strain HI2424).